The chain runs to 114 residues: Nucleoid-associated protein Amet_4780 (114 aa).

The tract at residues 23–42 is disordered; that stretch reads QKMQKDMEKTQAALEEKEVE. The segment covering 25-42 has biased composition (basic and acidic residues); it reads MQKDMEKTQAALEEKEVE.

The protein belongs to the YbaB/EbfC family. As to quaternary structure, homodimer.

The protein localises to the cytoplasm. It is found in the nucleoid. Functionally, binds to DNA and alters its conformation. May be involved in regulation of gene expression, nucleoid organization and DNA protection. The sequence is that of Nucleoid-associated protein Amet_4780 from Alkaliphilus metalliredigens (strain QYMF).